A 511-amino-acid polypeptide reads, in one-letter code: GMP synthase [glutamine-hydrolyzing] (511 aa).

Positions 3 to 198 constitute a Glutamine amidotransferase type-1 domain; the sequence is SVLVLDFGSQ…LLNIAAITPD (196 aa). The active-site Nucleophile is the C80. Residues H172 and E174 contribute to the active site. Residues 199–386 form the GMPS ATP-PPase domain; the sequence is WSSKSFIEHQ…LGIPEDILMR (188 aa). 226–232 provides a ligand contact to ATP; sequence SGGVDST.

As to quaternary structure, homodimer.

It carries out the reaction XMP + L-glutamine + ATP + H2O = GMP + L-glutamate + AMP + diphosphate + 2 H(+). It participates in purine metabolism; GMP biosynthesis; GMP from XMP (L-Gln route): step 1/1. Catalyzes the synthesis of GMP from XMP. The sequence is that of GMP synthase [glutamine-hydrolyzing] from Chlorobium chlorochromatii (strain CaD3).